The primary structure comprises 255 residues: Isoprenyl transferase (255 aa).

Aspartate 35 is an active-site residue. Residue aspartate 35 coordinates Mg(2+). Substrate contacts are provided by residues 36 to 39 (GNGR), tryptophan 40, arginine 48, histidine 52, and 80 to 82 (STE). Catalysis depends on asparagine 83, which acts as the Proton acceptor. Residues tryptophan 84, arginine 86, arginine 203, and 209–211 (RIS) contribute to the substrate site. Mg(2+) is bound at residue glutamate 222.

The protein belongs to the UPP synthase family. As to quaternary structure, homodimer. Requires Mg(2+) as cofactor.

Catalyzes the condensation of isopentenyl diphosphate (IPP) with allylic pyrophosphates generating different type of terpenoids. In Clostridium tetani (strain Massachusetts / E88), this protein is Isoprenyl transferase.